The chain runs to 1729 residues: 1,3-beta-glucan synthase component bgs1 (1729 aa).

Serine 23 carries the phosphoserine modification. The next 6 helical transmembrane spans lie at 378 to 398 (WTAC…AVVF), 416 to 436 (SMLL…FIFA), 448 to 468 (LVVG…YSIT), 503 to 523 (FVSW…SYFF), 546 to 566 (YILG…LLYL), and 577 to 597 (YLWY…CLGI). A phosphoserine mark is found at serine 784 and serine 788. 8 consecutive transmembrane segments (helical) span residues 1180–1200 (MVIM…GAMY), 1237–1257 (ILSI…CELG), 1337–1357 (MLLF…WITL), 1440–1460 (YGEI…FLFI), 1484–1504 (VAPL…GIML), 1515–1535 (YGVY…VVVF), 1550–1572 (LLGF…ICFL), and 1678–1698 (ATLY…PFVF).

The protein belongs to the glycosyltransferase 48 family. In terms of assembly, component of the 1,3-beta-glucan synthase (GS) complex, composed of at least the alternate catalytic subunits bgs1, bgs2, bgs3, and bgs4, and a regulatory subunit chr4.

The protein localises to the cell membrane. It localises to the cell septum. The enzyme catalyses [(1-&gt;3)-beta-D-glucosyl](n) + UDP-alpha-D-glucose = [(1-&gt;3)-beta-D-glucosyl](n+1) + UDP + H(+). In terms of biological role, alternate catalytic subunit of the 1,3-beta-glucan synthase (GS) complex. Synthesizes 1,3-beta-glucan, a major structural component of the fungal cell wall. Required for the assembly of the division septum and maintenance of cell polarity. The chain is 1,3-beta-glucan synthase component bgs1 (bgs1) from Schizosaccharomyces pombe (strain 972 / ATCC 24843) (Fission yeast).